The primary structure comprises 372 residues: MALKFHVLHQSKKSRARVGKIETAHGIIDTPAFVPVATNGALKGVIDHSNIPLMFCNTYHLLVHPGTEAIAAMGGLHKFMNRNAPIITDSGGFQIFSLAYGSVAEEIKSRGKKKGSSSILEVNDEGVWFKSYRDGHKLFLSPEVSVQAQKDLGADIIIPLDELLPFHSDEKYFLSSCSRTYVWEKRSLDYHKKDPRHQSMYGVIHGGIDPEQRKIGCQFVEDHPFDGFAIGGSLGRNLQEMLPVVDVTTSYLSKDRPVHLLGIGDLPSIHATVGLGIDSFDSSYPTKAARHGLILSSQGPIKIANQAYANDLSSLDPECTCATCTSNISRAYLRHLFKVHEPNAAIWASIHNLHYMQEVMKNIREQILNDEI.

Aspartate 89 serves as the catalytic Proton acceptor. Residues 89-93 (DSGGF), aspartate 161, and glycine 232 contribute to the substrate site. The tract at residues 262–268 (GIGDLPS) is RNA binding. Residue aspartate 281 is the Nucleophile of the active site. The tract at residues 286–290 (TKAAR) is RNA binding; important for wobble base 34 recognition. Zn(2+)-binding residues include cysteine 319, cysteine 321, cysteine 324, and histidine 351.

The protein belongs to the queuine tRNA-ribosyltransferase family. In terms of assembly, homodimer. Within each dimer, one monomer is responsible for RNA recognition and catalysis, while the other monomer binds to the replacement base PreQ1. The cofactor is Zn(2+).

The enzyme catalyses 7-aminomethyl-7-carbaguanine + guanosine(34) in tRNA = 7-aminomethyl-7-carbaguanosine(34) in tRNA + guanine. Its pathway is tRNA modification; tRNA-queuosine biosynthesis. Its function is as follows. Catalyzes the base-exchange of a guanine (G) residue with the queuine precursor 7-aminomethyl-7-deazaguanine (PreQ1) at position 34 (anticodon wobble position) in tRNAs with GU(N) anticodons (tRNA-Asp, -Asn, -His and -Tyr). Catalysis occurs through a double-displacement mechanism. The nucleophile active site attacks the C1' of nucleotide 34 to detach the guanine base from the RNA, forming a covalent enzyme-RNA intermediate. The proton acceptor active site deprotonates the incoming PreQ1, allowing a nucleophilic attack on the C1' of the ribose to form the product. After dissociation, two additional enzymatic reactions on the tRNA convert PreQ1 to queuine (Q), resulting in the hypermodified nucleoside queuosine (7-(((4,5-cis-dihydroxy-2-cyclopenten-1-yl)amino)methyl)-7-deazaguanosine). This is Queuine tRNA-ribosyltransferase from Chlamydia caviae (strain ATCC VR-813 / DSM 19441 / 03DC25 / GPIC) (Chlamydophila caviae).